The following is a 266-amino-acid chain: Phosphatidylglycerol--prolipoprotein diacylglyceryl transferase (266 aa).

The next 7 helical transmembrane spans lie at 10 to 30 (VALA…LIGI), 56 to 76 (LVFW…VLFY), 92 to 112 (WKGG…VWWF), 120 to 140 (FFQL…AGRI), 171 to 191 (PSQL…LWLF), 199 to 219 (ASVS…VEFV), and 233 to 253 (WLTM…ALMV). Arg139 is a binding site for a 1,2-diacyl-sn-glycero-3-phospho-(1'-sn-glycerol).

Belongs to the Lgt family.

The protein resides in the cell inner membrane. The enzyme catalyses L-cysteinyl-[prolipoprotein] + a 1,2-diacyl-sn-glycero-3-phospho-(1'-sn-glycerol) = an S-1,2-diacyl-sn-glyceryl-L-cysteinyl-[prolipoprotein] + sn-glycerol 1-phosphate + H(+). It functions in the pathway protein modification; lipoprotein biosynthesis (diacylglyceryl transfer). Functionally, catalyzes the transfer of the diacylglyceryl group from phosphatidylglycerol to the sulfhydryl group of the N-terminal cysteine of a prolipoprotein, the first step in the formation of mature lipoproteins. The protein is Phosphatidylglycerol--prolipoprotein diacylglyceryl transferase of Pseudomonas paraeruginosa (strain DSM 24068 / PA7) (Pseudomonas aeruginosa (strain PA7)).